Here is a 312-residue protein sequence, read N- to C-terminus: Methionyl-tRNA formyltransferase (312 aa).

109–112 (SLLP) contributes to the (6S)-5,6,7,8-tetrahydrofolate binding site.

Belongs to the Fmt family.

It catalyses the reaction L-methionyl-tRNA(fMet) + (6R)-10-formyltetrahydrofolate = N-formyl-L-methionyl-tRNA(fMet) + (6S)-5,6,7,8-tetrahydrofolate + H(+). Attaches a formyl group to the free amino group of methionyl-tRNA(fMet). The formyl group appears to play a dual role in the initiator identity of N-formylmethionyl-tRNA by promoting its recognition by IF2 and preventing the misappropriation of this tRNA by the elongation apparatus. In Nitrosospira multiformis (strain ATCC 25196 / NCIMB 11849 / C 71), this protein is Methionyl-tRNA formyltransferase.